Reading from the N-terminus, the 291-residue chain is Small ribosomal subunit protein uS2 (291 aa).

This sequence belongs to the universal ribosomal protein uS2 family.

The polypeptide is Small ribosomal subunit protein uS2 (Orientia tsutsugamushi (strain Boryong) (Rickettsia tsutsugamushi)).